The chain runs to 640 residues: Tyrosine--tRNA ligase, mitochondrial (640 aa).

Tyrosine 100 serves as a coordination point for L-tyrosine. An ATP-binding site is contributed by aspartate 104. The short motif at 105 to 114 (PTAPSLHIGH) is the 'HIGH' region element. L-tyrosine contacts are provided by aspartate 144, tyrosine 248, glutamine 252, aspartate 255, and glutamine 274. Residues 322 to 326 (KFGKS) carry the 'KMSKS' region motif. Lysine 325 is an ATP binding site.

It belongs to the class-I aminoacyl-tRNA synthetase family.

The protein resides in the mitochondrion matrix. It carries out the reaction tRNA(Tyr) + L-tyrosine + ATP = L-tyrosyl-tRNA(Tyr) + AMP + diphosphate + H(+). Has both an aminoacyl-tRNA synthetase activity and is involved in the splicing of group I introns. This is Tyrosine--tRNA ligase, mitochondrial (YTS1) from Podospora anserina (Pleurage anserina).